The following is a 224-amino-acid chain: Cytidylate kinase (224 aa).

14-22 (GPAGSGKST) is a binding site for ATP.

It belongs to the cytidylate kinase family. Type 1 subfamily.

It localises to the cytoplasm. It catalyses the reaction CMP + ATP = CDP + ADP. The catalysed reaction is dCMP + ATP = dCDP + ADP. This chain is Cytidylate kinase, found in Mycoplasmoides gallisepticum (strain R(low / passage 15 / clone 2)) (Mycoplasma gallisepticum).